Reading from the N-terminus, the 606-residue chain is Chaperone protein DnaK (606 aa).

The residue at position 174 (Thr-174) is a Phosphothreonine; by autocatalysis. Polar residues predominate over residues 579–593; it reads ASAAGNPGQGQTNEN. The disordered stretch occupies residues 579-606; sequence ASAAGNPGQGQTNENPGGKTIDGDYKVN.

This sequence belongs to the heat shock protein 70 family.

Functionally, acts as a chaperone. The chain is Chaperone protein DnaK from Dictyoglomus thermophilum (strain ATCC 35947 / DSM 3960 / H-6-12).